A 160-amino-acid polypeptide reads, in one-letter code: Cytochrome b6-f complex subunit 4 (160 aa).

3 helical membrane-spanning segments follow: residues 36–56 (LLYV…GLAI), 95–115 (LLGV…PFIE), and 131–151 (TVFL…TMPI).

Belongs to the cytochrome b family. PetD subfamily. As to quaternary structure, the 4 large subunits of the cytochrome b6-f complex are cytochrome b6, subunit IV (17 kDa polypeptide, petD), cytochrome f and the Rieske protein, while the 4 small subunits are petG, petL, petM and petN. The complex functions as a dimer.

It is found in the plastid. It localises to the chloroplast thylakoid membrane. Functionally, component of the cytochrome b6-f complex, which mediates electron transfer between photosystem II (PSII) and photosystem I (PSI), cyclic electron flow around PSI, and state transitions. The chain is Cytochrome b6-f complex subunit 4 from Pyropia yezoensis (Susabi-nori).